A 189-amino-acid polypeptide reads, in one-letter code: RxLR effector protein CRE18 (189 aa).

The N-terminal stretch at 1 to 23 (MSKLFYAFAVLAVHVLTSSPTTA) is a signal peptide. The RxLR-dEER motif lies at 47-68 (RFLRSIHEGEDSLKPSAFSEER).

Belongs to the RxLR effector family.

It is found in the secreted. The protein localises to the host cytoplasm. Its subcellular location is the host nucleus. Its function is as follows. Effector that is involved in host plant infection. Contributes to virulence during the early infection stage, by inhibiting plant defense responses induced by both PAMP-triggered immunity (PTI) and effector-triggered immunity (ETI). In Phytophthora infestans (strain T30-4) (Potato late blight agent), this protein is RxLR effector protein CRE18.